Consider the following 543-residue polypeptide: Glutamyl-tRNA(Gln) amidotransferase subunit A, chloroplastic/mitochondrial (543 aa).

Active-site charge relay system residues include K123 and S198. S222 functions as the Acyl-ester intermediate in the catalytic mechanism.

It belongs to the amidase family. GatA subfamily. As to quaternary structure, subunit of the heterotrimeric GatCAB amidotransferase (AdT) complex, composed of A, B and C subunits.

The protein resides in the mitochondrion. It localises to the plastid. The protein localises to the chloroplast stroma. It catalyses the reaction L-glutamyl-tRNA(Gln) + L-glutamine + ATP + H2O = L-glutaminyl-tRNA(Gln) + L-glutamate + ADP + phosphate + H(+). Functionally, allows the formation of correctly charged Gln-tRNA(Gln) through the transamidation of misacylated Glu-tRNA(Gln) in chloroplasts and mitochondria. The reaction takes place in the presence of glutamine and ATP through an activated gamma-phospho-Glu-tRNA(Gln). The protein is Glutamyl-tRNA(Gln) amidotransferase subunit A, chloroplastic/mitochondrial of Oryza sativa subsp. indica (Rice).